Here is a 332-residue protein sequence, read N- to C-terminus: MSSDDLSLYFNEIVNNVNFRIKNFVKSNFKTLEEASFHLFTAGGKRLRPLVLVSSSDLIGGDRERAYKAAAAVEILHNFTLVHDDIMDNDGLRRGLPTVHVKWGEPMAILAGDYLHAKAFEALNEALKGLDGNTFYKAFSIFITSIEIISEGQAMDMSFENRLDVTEEEYIQMIKGKTAMLFSCSAALGGIINKANDDVVKKLTEYGLNLGISFQIVDDILGIIGDEKELGKPIYSDIREGKKTILVIKTLSEATEDEKKILVSTLGNKEAKKEDLERASEIIRKHSLQYAYDLAKKYSDLAIENLREIPVSNKTAEKALKYLAQFTIQRRK.

Isopentenyl diphosphate contacts are provided by K45, R48, and H77. D84 and D88 together coordinate Mg(2+). Residue R93 participates in an all-trans-polyprenyl diphosphate binding. R94 is an isopentenyl diphosphate binding site. The an all-trans-polyprenyl diphosphate site is built by K177, T178, Q215, K232, and K242.

The protein belongs to the FPP/GGPP synthase family. It depends on Mg(2+) as a cofactor.

The catalysed reaction is isopentenyl diphosphate + (2E,6E)-farnesyl diphosphate = (2E,6E,10E)-geranylgeranyl diphosphate + diphosphate. Its pathway is isoprenoid biosynthesis; geranylgeranyl diphosphate biosynthesis; geranylgeranyl diphosphate from farnesyl diphosphate and isopentenyl diphosphate: step 1/1. Its function is as follows. Catalyzes the condensation of isopentenyl pyrophosphate with the allylic pyrophosphates to yield geranylgeranyl diphosphate (GGPP) which is a precursor of the ether-linked lipids. In Saccharolobus solfataricus (strain ATCC 35092 / DSM 1617 / JCM 11322 / P2) (Sulfolobus solfataricus), this protein is Geranylgeranyl diphosphate synthase (gds).